The following is a 189-amino-acid chain: Threonylcarbamoyl-AMP synthase (189 aa).

A YrdC-like domain is found at 9–189; sequence ASAQRKLSVY…IDGETGKRLR (181 aa).

Belongs to the SUA5 family. TsaC subfamily.

It localises to the cytoplasm. The enzyme catalyses L-threonine + hydrogencarbonate + ATP = L-threonylcarbamoyladenylate + diphosphate + H2O. In terms of biological role, required for the formation of a threonylcarbamoyl group on adenosine at position 37 (t(6)A37) in tRNAs that read codons beginning with adenine. Catalyzes the conversion of L-threonine, HCO(3)(-)/CO(2) and ATP to give threonylcarbamoyl-AMP (TC-AMP) as the acyladenylate intermediate, with the release of diphosphate. The protein is Threonylcarbamoyl-AMP synthase of Neisseria gonorrhoeae (strain ATCC 700825 / FA 1090).